The primary structure comprises 1001 residues: Phosphatidylinositol 4,5-bisphosphate 5-phosphatase A (1001 aa).

Positions 1 to 12 (MEGQSRSGSAKS) are enriched in polar residues. 2 disordered regions span residues 1 to 130 (MEGQ…VASV) and 144 to 412 (SASA…QPTC). The RSXSXX motif 1 motif lies at 6–11 (RSGSAK). Residues 13–28 (GTRTGLGPLPGTHGAL) are compositionally biased toward low complexity. The segment covering 29 to 42 (QTGTPSKKVNSSFQ) has biased composition (polar residues). Arginine 56 bears the Asymmetric dimethylarginine; alternate mark. Position 56 is an omega-N-methylarginine; alternate (arginine 56). An Omega-N-methylarginine modification is found at arginine 65. Arginine 76 carries the asymmetric dimethylarginine modification. An Asymmetric dimethylarginine; alternate modification is found at arginine 83. Arginine 83 is subject to Omega-N-methylarginine; alternate. Polar residues predominate over residues 161-174 (SPTSRDQKQLSPTS). Serine 171 bears the Phosphoserine mark. The segment covering 180–196 (ALATSGLSLALASQEQP) has biased composition (low complexity). Residues 197–210 (PQSPSSPSPVPSPV) are compositionally biased toward pro residues. Residues 284-294 (ARPEAPRHSPE) show a composition bias toward basic and acidic residues. 2 positions are modified to phosphoserine: serine 292 and serine 325. Residues 338–348 (VPPPLPKPPRS) show a composition bias toward pro residues. The SH3-binding signature appears at 346–351 (PRSPSR). 2 stretches are compositionally biased toward low complexity: residues 349-361 (PSRS…NRSP) and 394-411 (SPVA…AQPT). Positions 351 to 356 (RSPSRS) match the RSXSXX motif 2 motif. Positions 420–723 (ITVVTWNVGT…SDHKPVAARF (304 aa)) are catalytic. Positions 724-835 (LLQFAFRDDV…IGVTEPFQIS (112 aa)) are required for ruffle localization. Positions 837 to 1001 (PTSESASSST…LGLEDGGLGP (165 aa)) are disordered. The segment covering 838–853 (TSESASSSTDSSGTSS) has biased composition (low complexity). 2 consecutive short sequence motifs (RSXSXX motif) follow at residues 869 to 874 (RSPSPG) and 880 to 885 (RSRSPG). Position 898 is a phosphoserine (serine 898). Low complexity-rich tracts occupy residues 905 to 917 (SRSP…QLPR) and 925 to 936 (SSGSRGSSEEGP). Positions 906-911 (RSPSPQ) match the RSXSXX motif 5 motif. Pro residues predominate over residues 937 to 949 (SGPPGPWAFPPAV). Phosphoserine is present on serine 985.

Belongs to the inositol 1,4,5-trisphosphate 5-phosphatase type II family. Post-translationally, phosphorylated on Ser/Thr residues. As to expression, expressed in heart, brain, kidney, stomach, small intestine and lung. Not expressed in spleen, thymus, skeletal muscle, testis and skin.

The protein localises to the cytoplasm. The catalysed reaction is 1D-myo-inositol 1,4,5-trisphosphate + H2O = 1D-myo-inositol 1,4-bisphosphate + phosphate. It catalyses the reaction 1D-myo-inositol 1,3,4,5-tetrakisphosphate + H2O = 1D-myo-inositol 1,3,4-trisphosphate + phosphate. The enzyme catalyses a 1,2-diacyl-sn-glycero-3-phospho-(1D-myo-inositol-4,5-bisphosphate) + H2O = a 1,2-diacyl-sn-glycero-3-phospho-(1D-myo-inositol 4-phosphate) + phosphate. In terms of biological role, inositol 5-phosphatase, which converts inositol 1,4,5-trisphosphate to inositol 1,4-bisphosphate. Also converts phosphatidylinositol 4,5-bisphosphate to phosphatidylinositol 4-phosphate and inositol 1,3,4,5-tetrakisphosphate to inositol 1,3,4-trisphosphate in vitro. May be involved in modulation of the function of inositol and phosphatidylinositol polyphosphate-binding proteins that are present at membranes ruffles. This chain is Phosphatidylinositol 4,5-bisphosphate 5-phosphatase A (Inpp5j), found in Rattus norvegicus (Rat).